A 312-amino-acid polypeptide reads, in one-letter code: Ribosomal RNA small subunit methyltransferase H (312 aa).

S-adenosyl-L-methionine contacts are provided by residues 35 to 37 (GGH), D55, D101, and Q108. A disordered region spans residues 285–306 (ALKPSEHEVTENSRSRSSVLRV). Positions 287-298 (KPSEHEVTENSR) are enriched in basic and acidic residues.

This sequence belongs to the methyltransferase superfamily. RsmH family.

The protein resides in the cytoplasm. The catalysed reaction is cytidine(1402) in 16S rRNA + S-adenosyl-L-methionine = N(4)-methylcytidine(1402) in 16S rRNA + S-adenosyl-L-homocysteine + H(+). Functionally, specifically methylates the N4 position of cytidine in position 1402 (C1402) of 16S rRNA. The protein is Ribosomal RNA small subunit methyltransferase H of Aeromonas salmonicida (strain A449).